Consider the following 212-residue polypeptide: Ribonuclease HII (212 aa).

An RNase H type-2 domain is found at 2 to 206 (TPLVGVDEAG…CERIRAEAEQ (205 aa)). The a divalent metal cation site is built by Asp8, Glu9, and Asp101.

The protein belongs to the RNase HII family. The cofactor is Mn(2+). Mg(2+) serves as cofactor.

It is found in the cytoplasm. It catalyses the reaction Endonucleolytic cleavage to 5'-phosphomonoester.. Endonuclease that specifically degrades the RNA of RNA-DNA hybrids. The chain is Ribonuclease HII from Natronomonas pharaonis (strain ATCC 35678 / DSM 2160 / CIP 103997 / JCM 8858 / NBRC 14720 / NCIMB 2260 / Gabara) (Halobacterium pharaonis).